The primary structure comprises 196 residues: V-type proton ATPase subunit E (196 aa).

This sequence belongs to the V-ATPase E subunit family.

Produces ATP from ADP in the presence of a proton gradient across the membrane. The chain is V-type proton ATPase subunit E from Clostridium botulinum (strain Eklund 17B / Type B).